The sequence spans 131 residues: Cytochrome b5 (131 aa).

The Cytochrome b5 heme-binding domain maps to 3–79; sequence AKIFSLDEVS…LEEYLIGSLD (77 aa). His-38 and His-62 together coordinate heme. Residues 108-125 traverse the membrane as a helical segment; sequence IILPALAIIGALVYKYVI.

Belongs to the cytochrome b5 family.

The protein localises to the endoplasmic reticulum membrane. The protein resides in the microsome membrane. Its function is as follows. Membrane bound hemoprotein which function as an electron carrier for several membrane bound oxygenases. The sequence is that of Cytochrome b5 from Rhizopus stolonifer (Rhizopus nigricans).